Consider the following 977-residue polypeptide: Collagen alpha-2(I) chain (977 aa).

Positions 1 to 977 are disordered; sequence SGGFDFSFLP…RGSQGSQGPS (977 aa). Pro-10, Pro-13, Pro-28, and Pro-34 each carry 4-hydroxyproline. Over residues 17–66 the composition is skewed to low complexity; the sequence is GPMGLMGPRGPPGASGAPGPQGFQGPAGEPGEPGQTGPAGARGPAGPPGK. The residue at position 91 (Lys-91) is a 5-hydroxylysine; alternate. O-linked (Gal...) hydroxylysine; alternate glycosylation is present at Lys-91. Low complexity-rich tracts occupy residues 138 to 159 and 205 to 226; these read SRGSDGSVGPVGPAGPIGSAGP and PGANGLTGAKGAAGLPGVAGAP. Residues 258 to 267 are compositionally biased toward gly residues; it reads GESGGKGEPG. Low complexity predominate over residues 268-278; the sequence is SAGPQGPPGSS. Residues 300 to 309 are compositionally biased toward gly residues; the sequence is GLRGGPGSRG. A compositionally biased stretch (low complexity) spans 322 to 338; it reads PAGARGASGPAGVRGPS. 4-hydroxyproline occurs at positions 344 and 347. Low complexity predominate over residues 373–392; sequence LPGIDGRPGPIGPAGARGEA. A compositionally biased stretch (gly residues) spans 441-450; sequence GVQGGKGEQG. Composition is skewed to low complexity over residues 497-514 and 526-536; these read SGESGAVGPSGAIGSRGP and EPGVVGAPGTA. A compositionally biased stretch (gly residues) spans 537 to 546; sequence GPAGSGGLPG. 2 stretches are compositionally biased toward low complexity: residues 569–605 and 620–640; these read VGTTGRDGARGAPGAVGAPGPAGATGDRGEAGAAGPA and VGPAGPNGFAGPAGAAGQPGA. A compositionally biased stretch (basic and acidic residues) spans 641-650; the sequence is KGERGTKGPK. The segment covering 658–668 has biased composition (low complexity); that stretch reads PTGPVGSAGPA. The span at 678 to 687 shows a compositional bias: gly residues; sequence GSRGDGGPPG. Over residues 689 to 698 the composition is skewed to low complexity; the sequence is TGFPGAAGRT. Gly residues predominate over residues 735-744; sequence GETGAGGPPG. Composition is skewed to low complexity over residues 752–779 and 787–797; these read SGEPGTAGPPGTAGPQGLLGAPGILGLP and LPGVAGAVGEP. The span at 798–817 shows a compositional bias: gly residues; that stretch reads GPLGIGPPGARGPSGAGVNG. 2 stretches are compositionally biased toward low complexity: residues 853 to 871 and 878 to 898; these read PVGAAGAPGPHGAVGPAGK and PGPAGSVGPVGAVGPRGPSGP. Residues 902–913 show a composition bias toward basic and acidic residues; that stretch reads RGDKGEAGDKGP.

This sequence belongs to the fibrillar collagen family. In terms of assembly, trimers of one alpha 2(I) and two alpha 1(I) chains. Interacts (via C-terminus) with TMEM131 (via PapD-L domain); the interaction is direct and is involved in assembly and TRAPPIII ER-to-Golgi transport complex-dependent secretion of collagen. In terms of processing, prolines at the third position of the tripeptide repeating unit (G-X-Y) are hydroxylated in some or all of the chains. As to expression, expressed in bones.

The protein localises to the secreted. It localises to the extracellular space. It is found in the extracellular matrix. Type I collagen is a member of group I collagen (fibrillar forming collagen). In Scelidodon sp. (strain SLP-2019) (South American ground sloth), this protein is Collagen alpha-2(I) chain.